Here is a 1372-residue protein sequence, read N- to C-terminus: DNA-directed RNA polymerase subunit beta (1372 aa).

It belongs to the RNA polymerase beta chain family. In terms of assembly, the RNAP catalytic core consists of 2 alpha, 1 beta, 1 beta' and 1 omega subunit. When a sigma factor is associated with the core the holoenzyme is formed, which can initiate transcription.

The catalysed reaction is RNA(n) + a ribonucleoside 5'-triphosphate = RNA(n+1) + diphosphate. Its function is as follows. DNA-dependent RNA polymerase catalyzes the transcription of DNA into RNA using the four ribonucleoside triphosphates as substrates. This is DNA-directed RNA polymerase subunit beta from Nitratidesulfovibrio vulgaris (strain ATCC 29579 / DSM 644 / CCUG 34227 / NCIMB 8303 / VKM B-1760 / Hildenborough) (Desulfovibrio vulgaris).